Consider the following 478-residue polypeptide: Membrane-bound lytic murein transglycosylase F (478 aa).

Residues 1-22 (MTRFLFAIILGFLLTACQQVTV) form the signal peptide. The non-LT domain stretch occupies residues 23–257 (EETEYVPHKL…HLNEKYFGHV (235 aa)). The interval 258-478 (KRFDYIDTRA…PGTLSPDKPK (221 aa)) is LT domain. Residue glutamate 302 is part of the active site. The segment at 446–478 (SKQQNSDEEEPSDLASEDGPAPVPGTLSPDKPK) is disordered. Residues 451-461 (SDEEEPSDLAS) show a composition bias toward acidic residues.

It in the N-terminal section; belongs to the bacterial solute-binding protein 3 family. This sequence in the C-terminal section; belongs to the transglycosylase Slt family.

Its subcellular location is the cell outer membrane. It catalyses the reaction Exolytic cleavage of the (1-&gt;4)-beta-glycosidic linkage between N-acetylmuramic acid (MurNAc) and N-acetylglucosamine (GlcNAc) residues in peptidoglycan, from either the reducing or the non-reducing ends of the peptidoglycan chains, with concomitant formation of a 1,6-anhydrobond in the MurNAc residue.. In terms of biological role, murein-degrading enzyme that degrades murein glycan strands and insoluble, high-molecular weight murein sacculi, with the concomitant formation of a 1,6-anhydromuramoyl product. Lytic transglycosylases (LTs) play an integral role in the metabolism of the peptidoglycan (PG) sacculus. Their lytic action creates space within the PG sacculus to allow for its expansion as well as for the insertion of various structures such as secretion systems and flagella. In Shewanella sp. (strain ANA-3), this protein is Membrane-bound lytic murein transglycosylase F.